We begin with the raw amino-acid sequence, 493 residues long: Probable mannosyl-oligosaccharide alpha-1,2-mannosidase 1B (493 aa).

Positions 1–18 (MHLPSLSVALALVSSSLA) are cleaved as a signal peptide. 2 N-linked (GlcNAc...) asparagine glycosylation sites follow: Asn87 and Asn174. Cys324 and Cys353 form a disulfide bridge. The active-site Proton donor is Glu367. A glycan (N-linked (GlcNAc...) asparagine) is linked at Asn489.

It belongs to the glycosyl hydrolase 47 family. As to quaternary structure, monomer. Requires Ca(2+) as cofactor. Mg(2+) serves as cofactor.

It localises to the cytoplasmic vesicle lumen. The enzyme catalyses N(4)-(alpha-D-Man-(1-&gt;2)-alpha-D-Man-(1-&gt;2)-alpha-D-Man-(1-&gt;3)-[alpha-D-Man-(1-&gt;2)-alpha-D-Man-(1-&gt;3)-[alpha-D-Man-(1-&gt;2)-alpha-D-Man-(1-&gt;6)]-alpha-D-Man-(1-&gt;6)]-beta-D-Man-(1-&gt;4)-beta-D-GlcNAc-(1-&gt;4)-beta-D-GlcNAc)-L-asparaginyl-[protein] (N-glucan mannose isomer 9A1,2,3B1,2,3) + 4 H2O = N(4)-(alpha-D-Man-(1-&gt;3)-[alpha-D-Man-(1-&gt;3)-[alpha-D-Man-(1-&gt;6)]-alpha-D-Man-(1-&gt;6)]-beta-D-Man-(1-&gt;4)-beta-D-GlcNAc-(1-&gt;4)-beta-D-GlcNAc)-L-asparaginyl-[protein] (N-glucan mannose isomer 5A1,2) + 4 beta-D-mannose. It carries out the reaction N(4)-(alpha-D-Man-(1-&gt;2)-alpha-D-Man-(1-&gt;2)-alpha-D-Man-(1-&gt;3)-[alpha-D-Man-(1-&gt;3)-[alpha-D-Man-(1-&gt;2)-alpha-D-Man-(1-&gt;6)]-alpha-D-Man-(1-&gt;6)]-beta-D-Man-(1-&gt;4)-beta-D-GlcNAc-(1-&gt;4)-beta-D-GlcNAc)-L-asparaginyl-[protein] (N-glucan mannose isomer 8A1,2,3B1,3) + 3 H2O = N(4)-(alpha-D-Man-(1-&gt;3)-[alpha-D-Man-(1-&gt;3)-[alpha-D-Man-(1-&gt;6)]-alpha-D-Man-(1-&gt;6)]-beta-D-Man-(1-&gt;4)-beta-D-GlcNAc-(1-&gt;4)-beta-D-GlcNAc)-L-asparaginyl-[protein] (N-glucan mannose isomer 5A1,2) + 3 beta-D-mannose. It participates in protein modification; protein glycosylation. Its function is as follows. Involved in the maturation of Asn-linked oligosaccharides. Progressively trims alpha-1,2-linked mannose residues from Man(9)GlcNAc(2) to produce Man(5)GlcNAc(2). This is Probable mannosyl-oligosaccharide alpha-1,2-mannosidase 1B (mns1B) from Aspergillus fumigatus (strain CBS 144.89 / FGSC A1163 / CEA10) (Neosartorya fumigata).